Consider the following 426-residue polypeptide: Serine--tRNA ligase (426 aa).

235 to 237 (TAE) provides a ligand contact to L-serine. ATP is bound at residue 266–268 (RRE). Position 289 (Glu289) interacts with L-serine. 353–356 (EISS) contributes to the ATP binding site. Residue Ser389 participates in L-serine binding.

This sequence belongs to the class-II aminoacyl-tRNA synthetase family. Type-1 seryl-tRNA synthetase subfamily. In terms of assembly, homodimer. The tRNA molecule binds across the dimer.

The protein resides in the cytoplasm. The enzyme catalyses tRNA(Ser) + L-serine + ATP = L-seryl-tRNA(Ser) + AMP + diphosphate + H(+). It carries out the reaction tRNA(Sec) + L-serine + ATP = L-seryl-tRNA(Sec) + AMP + diphosphate + H(+). It functions in the pathway aminoacyl-tRNA biosynthesis; selenocysteinyl-tRNA(Sec) biosynthesis; L-seryl-tRNA(Sec) from L-serine and tRNA(Sec): step 1/1. Catalyzes the attachment of serine to tRNA(Ser). Is also able to aminoacylate tRNA(Sec) with serine, to form the misacylated tRNA L-seryl-tRNA(Sec), which will be further converted into selenocysteinyl-tRNA(Sec). The protein is Serine--tRNA ligase of Nostoc sp. (strain PCC 7120 / SAG 25.82 / UTEX 2576).